A 201-amino-acid chain; its full sequence is Small ribosomal subunit protein uS4c (201 aa).

Positions 15 to 43 are disordered; that stretch reads LGALPGLTNKRPRAGSDLRNQSRSGKRSQ. One can recognise an S4 RNA-binding domain in the interval 89–149; the sequence is MRLDNILFRL…DEQKSIALIQ (61 aa).

As to quaternary structure, component of the chloroplast small ribosomal subunit (SSU). Mature 70S chloroplast ribosomes of higher plants consist of a small (30S) and a large (50S) subunit. The 30S small subunit contains 1 molecule of ribosomal RNA (16S rRNA) and 24 different proteins. The 50S large subunit contains 3 rRNA molecules (23S, 5S and 4.5S rRNA) and 33 different proteins.

Its subcellular location is the plastid. The protein resides in the chloroplast. Component of the chloroplast ribosome (chloro-ribosome), a dedicated translation machinery responsible for the synthesis of chloroplast genome-encoded proteins, including proteins of the transcription and translation machinery and components of the photosynthetic apparatus. The sequence is that of Small ribosomal subunit protein uS4c (rps4) from Spinacia oleracea (Spinach).